A 523-amino-acid polypeptide reads, in one-letter code: uncharacterized protein (523 aa).

The span at 1–14 (MAVSKNIKSNVSTH) shows a compositional bias: polar residues. Disordered regions lie at residues 1-36 (MAVSKNIKSNVSTHVTKKATKKTTNNGEESKTVKKA), 51-187 (HSSE…VVSS), and 200-224 (QKQEKEEEKQPKLVGHTNEADEMEK). Residues 87-97 (DNRGTRLKGDI) show a composition bias toward basic and acidic residues. Acidic residues-rich tracts occupy residues 117-130 (DMEEDDELDQDNEY) and 138-182 (QDDD…DDEN). Residues 200-210 (QKQEKEEEKQP) are compositionally biased toward basic and acidic residues.

It belongs to the AATF family.

This is an uncharacterized protein from Dictyostelium discoideum (Social amoeba).